The primary structure comprises 493 residues: Polyamine aminopropyltransferase 2 (493 aa).

Transmembrane regions (helical) follow at residues 9–29 (LCIF…ATLA), 32–52 (LLGN…LSMG), 68–88 (LAFV…VPIA), 101–121 (VIYG…PLAV), 137–157 (VLEK…YLFL), 161–181 (GLPL…FLLV), and 188–208 (KFLK…AVGH). The segment at 187–448 (KKFLKFLAIF…PLNFENFELK (262 aa)) is spermidine synthase. The 236-residue stretch at 202-437 (ATYAVGHKRI…GEWGMVIGSK (236 aa)) folds into the PABS domain. Glutamine 233 contacts S-methyl-5'-thioadenosine. Residues histidine 263 and aspartate 287 each coordinate spermidine. S-methyl-5'-thioadenosine is bound by residues aspartate 306 and 340–341 (DA). The active-site Proton acceptor is the aspartate 358.

The protein belongs to the spermidine/spermine synthase family. As to quaternary structure, homodimer or homotetramer.

The protein resides in the cell membrane. It catalyses the reaction S-adenosyl 3-(methylsulfanyl)propylamine + putrescine = S-methyl-5'-thioadenosine + spermidine + H(+). It participates in amine and polyamine biosynthesis; spermidine biosynthesis; spermidine from putrescine: step 1/1. Functionally, catalyzes the irreversible transfer of a propylamine group from the amino donor S-adenosylmethioninamine (decarboxy-AdoMet) to putrescine (1,4-diaminobutane) to yield spermidine. The sequence is that of Polyamine aminopropyltransferase 2 from Aquifex aeolicus (strain VF5).